A 246-amino-acid chain; its full sequence is 5-oxoprolinase subunit A (246 aa).

This sequence belongs to the LamB/PxpA family. In terms of assembly, forms a complex composed of PxpA, PxpB and PxpC.

It catalyses the reaction 5-oxo-L-proline + ATP + 2 H2O = L-glutamate + ADP + phosphate + H(+). Catalyzes the cleavage of 5-oxoproline to form L-glutamate coupled to the hydrolysis of ATP to ADP and inorganic phosphate. This Cupriavidus necator (strain ATCC 17699 / DSM 428 / KCTC 22496 / NCIMB 10442 / H16 / Stanier 337) (Ralstonia eutropha) protein is 5-oxoprolinase subunit A.